Reading from the N-terminus, the 186-residue chain is Probable RNA 2'-phosphotransferase (186 aa).

This sequence belongs to the KptA/TPT1 family.

Its function is as follows. Removes the 2'-phosphate from RNA via an intermediate in which the phosphate is ADP-ribosylated by NAD followed by a presumed transesterification to release the RNA and generate ADP-ribose 1''-2''-cyclic phosphate (APPR&gt;P). May function as an ADP-ribosylase. This Agrobacterium fabrum (strain C58 / ATCC 33970) (Agrobacterium tumefaciens (strain C58)) protein is Probable RNA 2'-phosphotransferase.